Here is a 263-residue protein sequence, read N- to C-terminus: Small ribosomal subunit protein uS2 (263 aa).

Ser-2 is modified (N-acetylserine). The span at 213–223 shows a compositional bias: low complexity; sequence NAAEEARAGAT. A disordered region spans residues 213 to 245; it reads NAAEEARAGATEETEEVVAEAETEWNTETNVED. Residues 224–245 show a composition bias toward acidic residues; the sequence is EETEEVVAEAETEWNTETNVED.

It belongs to the universal ribosomal protein uS2 family. In terms of assembly, component of the small ribosomal subunit. Mature ribosomes consist of a small (40S) and a large (60S) subunit. The 40S subunit contains about 33 different proteins and 1 molecule of RNA (18S). The 60S subunit contains about 49 different proteins and 3 molecules of RNA (25S, 5.8S and 5S). Interacts with RPS21.

The protein localises to the cytoplasm. In terms of biological role, required for the assembly and/or stability of the 40S ribosomal subunit. Required for the processing of the 20S rRNA-precursor to mature 18S rRNA in a late step of the maturation of 40S ribosomal subunits. This chain is Small ribosomal subunit protein uS2, found in Clavispora lusitaniae (strain ATCC 42720) (Yeast).